The chain runs to 932 residues: Calpain-like protease palB/cpr-8 (932 aa).

Residues 96–419 (KLHGNIFPPW…FDSLYVNWSP (324 aa)) enclose the Calpain catalytic domain. Active-site residues include cysteine 178, histidine 346, and asparagine 366. The disordered stretch occupies residues 890–932 (QGHVTEGSDDDGGGGGGGGGGVHVEISSDGVVSIGEWEVADED). Over residues 902–911 (GGGGGGGGGV) the composition is skewed to gly residues.

The protein belongs to the peptidase C2 family. PalB/RIM13 subfamily.

Functionally, required for the proteolytic cleavage of the transcription factor pacc-1 in response to alkaline ambient pH. In Neurospora crassa (strain ATCC 24698 / 74-OR23-1A / CBS 708.71 / DSM 1257 / FGSC 987), this protein is Calpain-like protease palB/cpr-8 (cpr-8).